Reading from the N-terminus, the 1411-residue chain is DNA-directed RNA polymerase subunit beta' (1411 aa).

Zn(2+) is bound by residues cysteine 69, cysteine 71, cysteine 84, and cysteine 87. Positions 461, 463, and 465 each coordinate Mg(2+). The Zn(2+) site is built by cysteine 809, cysteine 883, cysteine 890, and cysteine 893.

The protein belongs to the RNA polymerase beta' chain family. As to quaternary structure, the RNAP catalytic core consists of 2 alpha, 1 beta, 1 beta' and 1 omega subunit. When a sigma factor is associated with the core the holoenzyme is formed, which can initiate transcription. Mg(2+) serves as cofactor. It depends on Zn(2+) as a cofactor.

It carries out the reaction RNA(n) + a ribonucleoside 5'-triphosphate = RNA(n+1) + diphosphate. Functionally, DNA-dependent RNA polymerase catalyzes the transcription of DNA into RNA using the four ribonucleoside triphosphates as substrates. In Ehrlichia ruminantium (strain Gardel), this protein is DNA-directed RNA polymerase subunit beta'.